The primary structure comprises 575 residues: Adenine deaminase 1 (575 aa).

Belongs to the metallo-dependent hydrolases superfamily. Adenine deaminase family. Requires Mn(2+) as cofactor.

It carries out the reaction adenine + H2O + H(+) = hypoxanthine + NH4(+). The chain is Adenine deaminase 1 from Agrobacterium fabrum (strain C58 / ATCC 33970) (Agrobacterium tumefaciens (strain C58)).